Reading from the N-terminus, the 190-residue chain is MESKSDASVATTPIISSSSSPPPSLSPRVVLSPCAACKILRRRCAERCVLAPYFPPTDPAKFTIAHRVFGASNIIKFLQELPESQRTDAVNSMVYEAEARIRDPVYGCAGAIYHLQRQVSELQAQLAKAQVEMVNMQFQRSNLLELIYNMDQQQKQEQDNMSFESNDLGFLEDKSNTNSSMLWWDPLWTC.

The segment covering 1–11 has biased composition (polar residues); the sequence is MESKSDASVAT. The segment at 1–27 is disordered; the sequence is MESKSDASVATTPIISSSSSPPPSLSP. Positions 32 to 133 constitute an LOB domain; that stretch reads SPCAACKILR…AQLAKAQVEM (102 aa).

This sequence belongs to the LOB domain-containing protein family. Expressed in young shoots, roots, stems, leaves and flowers.

The protein is LOB domain-containing protein 1 (LBD1) of Arabidopsis thaliana (Mouse-ear cress).